The sequence spans 375 residues: MPFSAASSSSVSSIAEEPPPKKQHDPSPSCSSYLLLLPDEIILNCLARLPKCYYPVISLVSKTFRRLIASPEIYVERSLLRRTERVLYVVLRSHATETPRWYTLNFKPFGNDSNNHRLVPIPSFPSIPCWGMSIVAIDSEIYVLGGCIDNELVSTGFVVECPSHTCRLLPSMKQARGCAAVGFFDGKLYVIGGCNPLSVNWVEAFDLKTQTWESGLGVNNVEMHDLTIRSFAIDDKIYIMDRKNSFVYDPKEGTLETDELLDTQWSVGSCVIDGKIYTFGSKNRIWVFDPIAMVWDRLKGLDDLPDKRDGSRMSNLGGNLAIMFNLEKGSTKICCTEIRLERREGGKIWGTVLWSNIVITLKEPSTIVRCLTVTV.

Over residues Met-1 to Ala-15 the composition is skewed to low complexity. The tract at residues Met-1–Ser-27 is disordered. The F-box domain occupies Ser-31 to Arg-77. 3 Kelch repeats span residues Glu-140–Gly-186, Lys-187–Ala-232, and Lys-275–Ala-321.

This chain is F-box/kelch-repeat protein At4g39240, found in Arabidopsis thaliana (Mouse-ear cress).